The sequence spans 158 residues: Lipoprotein signal peptidase (158 aa).

The next 4 helical transmembrane spans lie at 7 to 27, 38 to 58, 67 to 87, and 95 to 115; these read LFWI…YWVV, ILPG…FSLF, WLSL…PVLD, and GLIL…GYVV. Residues Asp-116 and Asp-132 contribute to the active site. The helical transmembrane segment at 125 to 145 threads the bilayer; sequence FAVFNMADSFISIGIVCLLLA.

The protein belongs to the peptidase A8 family.

The protein localises to the cell inner membrane. It carries out the reaction Release of signal peptides from bacterial membrane prolipoproteins. Hydrolyzes -Xaa-Yaa-Zaa-|-(S,diacylglyceryl)Cys-, in which Xaa is hydrophobic (preferably Leu), and Yaa (Ala or Ser) and Zaa (Gly or Ala) have small, neutral side chains.. Its pathway is protein modification; lipoprotein biosynthesis (signal peptide cleavage). This protein specifically catalyzes the removal of signal peptides from prolipoproteins. The sequence is that of Lipoprotein signal peptidase from Nostoc sp. (strain PCC 7120 / SAG 25.82 / UTEX 2576).